The primary structure comprises 406 residues: Argininosuccinate synthase (406 aa).

ATP is bound by residues 10 to 18 (AYSGGLDTS) and A37. Positions 88 and 93 each coordinate L-citrulline. G118 lines the ATP pocket. 3 residues coordinate L-aspartate: T120, N124, and D125. N124 lines the L-citrulline pocket. The L-citrulline site is built by R128, S180, S189, E265, and Y277.

This sequence belongs to the argininosuccinate synthase family. Type 1 subfamily. In terms of assembly, homotetramer.

It is found in the cytoplasm. It catalyses the reaction L-citrulline + L-aspartate + ATP = 2-(N(omega)-L-arginino)succinate + AMP + diphosphate + H(+). It functions in the pathway amino-acid biosynthesis; L-arginine biosynthesis; L-arginine from L-ornithine and carbamoyl phosphate: step 2/3. The protein is Argininosuccinate synthase of Methylobacillus flagellatus (strain ATCC 51484 / DSM 6875 / VKM B-1610 / KT).